The sequence spans 205 residues: Macrophage immunometabolism regulator (205 aa).

The segment at 1-40 (MEVDINGVNRTNNSVPSTTEGSSPSKPDPEKPRCSSTPCS) is disordered. Over residues 8 to 25 (VNRTNNSVPSTTEGSSPS) the composition is skewed to polar residues.

It belongs to the UNC119-binding protein family. As to quaternary structure, interacts with unc119 family proteins; interaction preferentially takes place when unc119 proteins are unliganded with myristoylated proteins.

It is found in the cytoplasm. The protein resides in the cell projection. Its subcellular location is the cilium. In terms of biological role, may play a role in immune regulation through regulation of the macrophage function. May also play a role in trafficking of proteins via its interaction with unc119 family cargo adapters. May play a role in ciliary membrane localization. The protein is Macrophage immunometabolism regulator (macir) of Xenopus tropicalis (Western clawed frog).